We begin with the raw amino-acid sequence, 1476 residues long: Cystic fibrosis transmembrane conductance regulator (1476 aa).

Residues 1-77 (MQKSPLEKAS…QLIHALRRCF (77 aa)) lie on the Cytoplasmic side of the membrane. Residues 78–98 (VWRFVFYGVLLYLGEVTKAVQ) form a helical membrane-spanning segment. In terms of domain architecture, ABC transmembrane type-1 1 spans 81–365 (FVFYGVLLYL…TAVQIWYDSL (285 aa)). The Extracellular segment spans residues 99–122 (PVLLGRIIASYDPDNTEERSIAIY). The helical transmembrane segment at 123-146 (LGIGLCLLFIVRTLLLHPAIFGLH) threads the bilayer. Over 147 to 195 (HIGMQMRIAMFSLIYKKTLKLSSRVLDKISIGQLISLLSNNLNKFDEGL) the chain is Cytoplasmic. The helical transmembrane segment at 196–216 (ALAHFIWIAPLQVVLLMGLLW) threads the bilayer. Over 217–222 (DLLQFS) the chain is Extracellular. The helical transmembrane segment at 223 to 243 (AFCGLGLLIVLVIFQAILGKM) threads the bilayer. The Cytoplasmic portion of the chain corresponds to 244–298 (MVKYRDKRAAKINERLVITSEVIDNIYSVKAYCWESAMEKIIESLREEELKMTRR). Residues 299 to 319 (SAYMRFFTSSAFFFSGFFVVF) form a helical membrane-spanning segment. At 320–339 (LSVLPYTVINGIVLRKIFTT) the chain is on the extracellular side. A helical transmembrane segment spans residues 340-358 (ISFCIVLRMSVTRQFPTAV). Residues 359–853 (QIWYDSLGMI…YLRYFTLHRG (495 aa)) lie on the Cytoplasmic side of the membrane. ATP is bound by residues Trp-401, 458–465 (GSTGAGKT), and Gln-493. In terms of domain architecture, ABC transporter 1 spans 412–646 (VQLNNDDRKT…RPDFSSKLMG (235 aa)). The S-palmitoyl cysteine moiety is linked to residue Cys-524. Ser-549 and Ser-660 each carry phosphoserine. Residues 654–826 (TEERRSSILT…EEINEEDLKE (173 aa)) form a disordered R region region. Phosphoserine; by PKA is present on Ser-670. Ser-684, Ser-698, and Ser-710 each carry phosphoserine. Thr-715 is modified (phosphothreonine). Ser-732, Ser-763, Ser-785, Ser-790, and Ser-808 each carry phosphoserine. A helical transmembrane segment spans residues 854–874 (LFAVLIWCVLVFLVEVAASLF). Residues 854 to 1153 (LFAVLIWCVL…SSIDTDSLMR (300 aa)) enclose the ABC transmembrane type-1 2 domain. At 875-913 (VLWLLKNNPVNGGNNGTKIANTSYVVVITSSSFYYIFYI) the chain is on the extracellular side. Residues Asn-889 and Asn-895 are each glycosylated (N-linked (GlcNAc...) asparagine). A discontinuously helical transmembrane segment spans residues 914–934 (YVGVADTLLALSLFRGLPLVH). The Cytoplasmic segment spans residues 935 to 985 (TLITASKILHRKMLHSILHAPMSTFNKLKAGGILNRFSKDIAILDDFLPLT). The chain crosses the membrane as a helical span at residues 986 to 1006 (IFDFIQLLFIVVGAIIVVSAL). The Extracellular portion of the chain corresponds to 1007–1008 (QP). The chain crosses the membrane as a helical span at residues 1009–1029 (YIFLATVPGLAVFILLRAYFL). Topologically, residues 1030–1090 (HTSQQLKQLE…TANWFMYLAT (61 aa)) are cytoplasmic. Residues 1091-1111 (LRWFQMRIDMIFVLFFIVVTF) form a helical membrane-spanning segment. Residues 1112-1125 (ISILTTGEGEGTTG) lie on the Extracellular side of the membrane. Residues 1126 to 1146 (IILTLAMNIMSTLQWAVNSSI) form a helical membrane-spanning segment. Over 1147–1476 (DTDSLMRSVS…TEEEVQETRL (330 aa)) the chain is Cytoplasmic. One can recognise an ABC transporter 2 domain in the interval 1208-1439 (VKDLTVKYVD…KSVFQRALSS (232 aa)). ATP is bound by residues Tyr-1215 and 1240–1247 (GRTGSGKS). The segment at 1382–1476 (RVLRQAFAGC…TEEEVQETRL (95 aa)) is interaction with GORASP2. The S-palmitoyl cysteine moiety is linked to residue Cys-1391. Phosphoserine is present on residues Ser-1440 and Ser-1452. A compositionally biased stretch (basic residues) spans 1445-1456 (LFHGRHSSKQKP). The disordered stretch occupies residues 1445-1476 (LFHGRHSSKQKPRTQITAVKEETEEEVQETRL). Positions 1466-1476 (ETEEEVQETRL) are enriched in acidic residues. The PDZ-binding signature appears at 1474-1476 (TRL).

The protein belongs to the ABC transporter superfamily. ABCC family. CFTR transporter (TC 3.A.1.202) subfamily. As to quaternary structure, monomer; does not require oligomerization for channel activity. May form oligomers in the membrane. Interacts with SLC4A7 through NHERF1. Interacts with SHANK2. Interacts with NHERF1 and MYO6. Interacts (via C-terminus) with GOPC (via PDZ domain); this promotes CFTR internalization and thereby decreases channel activity. Interacts with SLC4A7 through NHERF1. Found in a complex with MYO5B and RAB11A. Interacts with ANO1. Interacts with SLC26A8. Interacts with AHCYL1; the interaction increases CFTR activity. Interacts with CSE1L. The core-glycosylated form interacts with GORASP2 (via PDZ GRASP-type 1 domain) in respone to ER stress. Interacts with MARCHF2; the interaction leads to CFTR ubiqtuitination and degradation. Interacts with ADGRG2. Post-translationally, N-glycosylated. Phosphorylated; cAMP treatment promotes phosphorylation and activates the channel. Dephosphorylation decreases the ATPase activity (in vitro). Phosphorylation at PKA sites activates the channel. Phosphorylation at PKC sites enhances the response to phosphorylation by PKA. Phosphorylated by AMPK; this inhibits channel activity. In terms of processing, ubiquitinated, leading to its degradation in the lysosome. Deubiquitination by USP10 in early endosomes enhances its endocytic recycling to the cell membrane. Ubiquitinated by RNF185 during ER stress. Ubiquitinated by MARCHF2. As to expression, detected in epithelial cells in nasopharynx, submandibular gland, pancreas and ileum (at protein level). Expressed in the epididymis. In the caput section of the epididymis, expressed uniformly on both the luminal and basolateral sides of the ducts and on sperm in the caput lumen (at protein level). In the cauda, detected along the luminal border but not continuously and is also expressed on the basolateral surface. Within the caudal lumen, detected on sperm.

Its subcellular location is the apical cell membrane. It is found in the early endosome membrane. The protein resides in the cell membrane. It localises to the recycling endosome membrane. The protein localises to the endoplasmic reticulum membrane. Its subcellular location is the nucleus. The catalysed reaction is ATP + H2O + closed Cl(-) channel = ADP + phosphate + open Cl(-) channel.. The enzyme catalyses chloride(in) = chloride(out). It catalyses the reaction hydrogencarbonate(in) = hydrogencarbonate(out). It carries out the reaction ATP + H2O = ADP + phosphate + H(+). In terms of biological role, epithelial ion channel that plays an important role in the regulation of epithelial ion and water transport and fluid homeostasis. Mediates the transport of chloride ions across the cell membrane. Possesses an intrinsic ATPase activity and utilizes ATP to gate its channel; the passive flow of anions through the channel is gated by cycles of ATP binding and hydrolysis by the ATP-binding domains. The ion channel is also permeable to HCO(3)(-); selectivity depends on the extracellular chloride concentration. Exerts its function also by modulating the activity of other ion channels and transporters. Contributes to the regulation of the pH and the ion content of the epithelial fluid layer. Modulates the activity of the epithelial sodium channel (ENaC) complex, in part by regulating the cell surface expression of the ENaC complex. May regulate bicarbonate secretion and salvage in epithelial cells by regulating the transporter SLC4A7. Can inhibit the chloride channel activity of ANO1. Plays a role in the chloride and bicarbonate homeostasis during sperm epididymal maturation and capacitation. The polypeptide is Cystic fibrosis transmembrane conductance regulator (Rattus norvegicus (Rat)).